Reading from the N-terminus, the 498-residue chain is Cysteine--tRNA ligase (498 aa).

A Zn(2+)-binding site is contributed by Cys-44. A 'HIGH' region motif is present at residues Pro-46–His-56. 3 residues coordinate Zn(2+): Cys-235, His-260, and Glu-264. A 'KMSKS' region motif is present at residues Lys-291 to Ser-295. Lys-294 contributes to the ATP binding site.

Belongs to the class-I aminoacyl-tRNA synthetase family. As to quaternary structure, monomer. The cofactor is Zn(2+).

It localises to the cytoplasm. It carries out the reaction tRNA(Cys) + L-cysteine + ATP = L-cysteinyl-tRNA(Cys) + AMP + diphosphate. This Deinococcus radiodurans (strain ATCC 13939 / DSM 20539 / JCM 16871 / CCUG 27074 / LMG 4051 / NBRC 15346 / NCIMB 9279 / VKM B-1422 / R1) protein is Cysteine--tRNA ligase (cysS).